Consider the following 116-residue polypeptide: Protein Rev (116 aa).

Phosphoserine; by host CK2 is present on residues S5 and S8. A homomultimerization region spans residues 18–26 (CIKILYQSN). The disordered stretch occupies residues 27 to 47 (PYPKPEGTRQARRNRRRRWRA). The Nuclear localization signal and RNA-binding (RRE) motif lies at 34 to 50 (TRQARRNRRRRWRARQR). Residues 36–47 (QARRNRRRRWRA) are compositionally biased toward basic residues. The Nuclear export signal and binding to XPO1 motif lies at 73–84 (LQLPPLERLHIN). A disordered region spans residues 87–116 (EDCGQGPEEGVGSSQISGESHAVLESGTKE). Residue S99 is modified to Phosphoserine; by host.

This sequence belongs to the HIV-1 REV protein family. Homomultimer; when bound to the RRE. Multimeric assembly is essential for activity and may involve XPO1. Binds to human KPNB1, XPO1, TNPO1, RANBP5 and IPO7. Interacts with the viral Integrase. Interacts with human KHDRBS1. Interacts with human NAP1; this interaction decreases Rev multimerization and stimulates its activity. Interacts with human DEAD-box helicases DDX3 and DDX24; these interactions may serve for viral RNA export to the cytoplasm and packaging, respectively. Interacts with human PSIP1; this interaction may inhibit HIV-1 DNA integration by promoting dissociation of the Integrase-LEDGF/p75 complex. Post-translationally, asymmetrically arginine dimethylated at one site by host PRMT6. Methylation impairs the RNA-binding activity and export of viral RNA from the nucleus to the cytoplasm. Phosphorylated by protein kinase CK2. Presence of, and maybe binding to the N-terminus of the regulatory beta subunit of CK2 is necessary for CK2-mediated Rev's phosphorylation.

Its subcellular location is the host nucleus. It is found in the host nucleolus. It localises to the host cytoplasm. Escorts unspliced or incompletely spliced viral pre-mRNAs (late transcripts) out of the nucleus of infected cells. These pre-mRNAs carry a recognition sequence called Rev responsive element (RRE) located in the env gene, that is not present in fully spliced viral mRNAs (early transcripts). This function is essential since most viral proteins are translated from unspliced or partially spliced pre-mRNAs which cannot exit the nucleus by the pathway used by fully processed cellular mRNAs. Rev itself is translated from a fully spliced mRNA that readily exits the nucleus. Rev's nuclear localization signal (NLS) binds directly to KPNB1/Importin beta-1 without previous binding to KPNA1/Importin alpha-1. KPNB1 binds to the GDP bound form of RAN (Ran-GDP) and targets Rev to the nucleus. In the nucleus, the conversion from Ran-GDP to Ran-GTP dissociates Rev from KPNB1 and allows Rev's binding to the RRE in viral pre-mRNAs. Rev multimerization on the RRE via cooperative assembly exposes its nuclear export signal (NES) to the surface. Rev can then form a complex with XPO1/CRM1 and Ran-GTP, leading to nuclear export of the complex. Conversion from Ran-GTP to Ran-GDP mediates dissociation of the Rev/RRE/XPO1/RAN complex, so that Rev can return to the nucleus for a subsequent round of export. Beside KPNB1, also seems to interact with TNPO1/Transportin-1, RANBP5/IPO5 and IPO7/RANBP7 for nuclear import. The nucleoporin-like HRB/RIP is an essential cofactor that probably indirectly interacts with Rev to release HIV RNAs from the perinuclear region to the cytoplasm. The sequence is that of Protein Rev from Human immunodeficiency virus type 1 group M subtype F1 (isolate VI850) (HIV-1).